Consider the following 409-residue polypeptide: Calsequestrin-2 (409 aa).

A signal peptide spans 1-19 (MKRAHLFVVGVYLLSSCRA). Tyr282 is modified (phosphotyrosine). Residue Asn335 is glycosylated (N-linked (GlcNAc...) asparagine). The disordered stretch occupies residues 364 to 409 (DVLSGKINTEDDDNEDEDDDDDNDDDDDDNGNSDEEDNDDSDEDDE). The segment covering 373–409 (EDDDNEDEDDDDDNDDDDDDNGNSDEEDNDDSDEDDE) has biased composition (acidic residues).

It belongs to the calsequestrin family. Monomer, homodimer and homooligomer. Mostly monomeric in the absence of calcium. Forms higher oligomers in a calcium-dependent manner. Dimers associate to form tetramers, that then form linear homomer chains. Interacts with ASPH and TRDN. Phosphorylation in the C-terminus, probably by CK2, moderately increases calcium buffering capacity. In terms of processing, N-glycosylated. Detected in heart muscle (at protein level).

Its subcellular location is the sarcoplasmic reticulum lumen. Its function is as follows. Calsequestrin is a high-capacity, moderate affinity, calcium-binding protein and thus acts as an internal calcium store in muscle. Calcium ions are bound by clusters of acidic residues at the protein surface, especially at the interface between subunits. Can bind around 60 Ca(2+) ions. Regulates the release of lumenal Ca(2+) via the calcium release channel RYR2; this plays an important role in triggering muscle contraction. Plays a role in excitation-contraction coupling in the heart and in regulating the rate of heart beats. The chain is Calsequestrin-2 (CASQ2) from Oryctolagus cuniculus (Rabbit).